We begin with the raw amino-acid sequence, 130 residues long: L-ectoine synthase (130 aa).

Belongs to the ectoine synthase family.

It catalyses the reaction (2S)-4-acetamido-2-aminobutanoate = L-ectoine + H2O. The protein operates within amine and polyamine biosynthesis; ectoine biosynthesis; L-ectoine from L-aspartate 4-semialdehyde: step 3/3. Its function is as follows. Catalyzes the circularization of gamma-N-acetyl-alpha,gamma-diaminobutyric acid (ADABA) to ectoine (1,4,5,6-tetrahydro-2-methyl-4-pyrimidine carboxylic acid), which is an excellent osmoprotectant. This Mycolicibacterium vanbaalenii (strain DSM 7251 / JCM 13017 / BCRC 16820 / KCTC 9966 / NRRL B-24157 / PYR-1) (Mycobacterium vanbaalenii) protein is L-ectoine synthase.